The primary structure comprises 179 residues: Large ribosomal subunit protein uL5 (179 aa).

It belongs to the universal ribosomal protein uL5 family. As to quaternary structure, part of the 50S ribosomal subunit; part of the 5S rRNA/L5/L18/L25 subcomplex. Contacts the 5S rRNA and the P site tRNA. Forms a bridge to the 30S subunit in the 70S ribosome.

This is one of the proteins that bind and probably mediate the attachment of the 5S RNA into the large ribosomal subunit, where it forms part of the central protuberance. In the 70S ribosome it contacts protein S13 of the 30S subunit (bridge B1b), connecting the 2 subunits; this bridge is implicated in subunit movement. Contacts the P site tRNA; the 5S rRNA and some of its associated proteins might help stabilize positioning of ribosome-bound tRNAs. This is Large ribosomal subunit protein uL5 from Azotobacter vinelandii (strain DJ / ATCC BAA-1303).